A 427-amino-acid chain; its full sequence is Histidinol dehydrogenase (427 aa).

NAD(+) contacts are provided by Y127, Q187, and N210. 3 residues coordinate substrate: S233, Q255, and H258. The Zn(2+) site is built by Q255 and H258. Residues E323 and H324 each act as proton acceptor in the active site. Substrate contacts are provided by H324, D357, E411, and H416. Zn(2+) is bound at residue D357. Zn(2+) is bound at residue H416.

This sequence belongs to the histidinol dehydrogenase family. Requires Zn(2+) as cofactor.

It catalyses the reaction L-histidinol + 2 NAD(+) + H2O = L-histidine + 2 NADH + 3 H(+). It participates in amino-acid biosynthesis; L-histidine biosynthesis; L-histidine from 5-phospho-alpha-D-ribose 1-diphosphate: step 9/9. Functionally, catalyzes the sequential NAD-dependent oxidations of L-histidinol to L-histidinaldehyde and then to L-histidine. This chain is Histidinol dehydrogenase, found in Streptococcus mutans serotype c (strain ATCC 700610 / UA159).